The sequence spans 193 residues: Peptidyl-tRNA hydrolase (193 aa).

Residue Y16 coordinates tRNA. H21 functions as the Proton acceptor in the catalytic mechanism. Residues Y66, N68, and N114 each contribute to the tRNA site.

This sequence belongs to the PTH family. Monomer.

The protein resides in the cytoplasm. It carries out the reaction an N-acyl-L-alpha-aminoacyl-tRNA + H2O = an N-acyl-L-amino acid + a tRNA + H(+). In terms of biological role, hydrolyzes ribosome-free peptidyl-tRNAs (with 1 or more amino acids incorporated), which drop off the ribosome during protein synthesis, or as a result of ribosome stalling. Functionally, catalyzes the release of premature peptidyl moieties from peptidyl-tRNA molecules trapped in stalled 50S ribosomal subunits, and thus maintains levels of free tRNAs and 50S ribosomes. The polypeptide is Peptidyl-tRNA hydrolase (Geobacter sulfurreducens (strain ATCC 51573 / DSM 12127 / PCA)).